A 118-amino-acid polypeptide reads, in one-letter code: Large ribosomal subunit protein bL20 (118 aa).

Belongs to the bacterial ribosomal protein bL20 family.

Binds directly to 23S ribosomal RNA and is necessary for the in vitro assembly process of the 50S ribosomal subunit. It is not involved in the protein synthesizing functions of that subunit. The protein is Large ribosomal subunit protein bL20 of Lactobacillus acidophilus (strain ATCC 700396 / NCK56 / N2 / NCFM).